The following is a 458-amino-acid chain: Adenylosuccinate synthetase (458 aa).

GTP contacts are provided by residues G17 to K23 and G45 to T47. D18 acts as the Proton acceptor in catalysis. D18 and G45 together coordinate Mg(2+). Residues D18–K21, N43–H46, T137, R151, Q247, T262, and R330 each bind IMP. H46 (proton donor) is an active-site residue. V326 to R332 is a substrate binding site. GTP contacts are provided by residues R332, K358–D360, and S440–S442.

This sequence belongs to the adenylosuccinate synthetase family. In terms of assembly, homodimer. Mg(2+) serves as cofactor.

Its subcellular location is the cytoplasm. The catalysed reaction is IMP + L-aspartate + GTP = N(6)-(1,2-dicarboxyethyl)-AMP + GDP + phosphate + 2 H(+). Its pathway is purine metabolism; AMP biosynthesis via de novo pathway; AMP from IMP: step 1/2. Its function is as follows. Plays an important role in the de novo pathway of purine nucleotide biosynthesis. Catalyzes the first committed step in the biosynthesis of AMP from IMP. The polypeptide is Adenylosuccinate synthetase (Verminephrobacter eiseniae (strain EF01-2)).